The following is a 460-amino-acid chain: Transcription factor TGA10 (460 aa).

Residues 1–11 (MQGHHQNHHQH) show a composition bias toward basic residues. Disordered stretches follow at residues 1–29 (MQGH…NKDG) and 43–163 (LDGQ…PKTL). Positions 12-21 (LSSSSATSSH) are enriched in low complexity. Polar residues-rich tracts occupy residues 65–81 (TQNL…NIFP) and 121–136 (DLTN…QGSK). Over residues 138–162 (IKKEGNRKGLASSDHDIPKSSDPKT) the composition is skewed to basic and acidic residues. Residues 159 to 203 (DPKTLRRLAQNREAARKSRLRKKAYVQQLESCRIKLTQLEQEIQR) form the bZIP domain. The interval 161-181 (KTLRRLAQNREAARKSRLRKK) is basic motif. The Nuclear localization signal motif lies at 163–170 (LRRLAQNR). A leucine-zipper region spans residues 187 to 201 (LESCRIKLTQLEQEI). Positions 236 to 455 (AAVFDMEYAR…QALSSLWLAR (220 aa)) constitute a DOG1 domain.

Belongs to the bZIP family. Homodimer. Binds DNA as a dimer. Interacts with floral glutaredoxins GRXC7/ROXY1 and GRXC8/ROXY2 in the nucleus. Interacts with TGA1, TGA2, TGA3, TGA4, TGA5, TGA6, TGA7, TGA9 and PAN. Expressed at low levels in inflorescence apex and flowers.

It localises to the nucleus. Functionally, together with TGA9, basic leucine-zipper transcription factor required for anther development, probably via the activation of SPL expression in anthers and via the regulation of genes with functions in early and middle tapetal development. Required for signaling responses to pathogen-associated molecular patterns (PAMPs) such as flg22 that involves chloroplastic reactive oxygen species (ROS) production and subsequent expression of H(2)O(2)-responsive genes. This chain is Transcription factor TGA10, found in Arabidopsis thaliana (Mouse-ear cress).